The primary structure comprises 259 residues: Bisphosphoglycerate mutase (259 aa).

An N-acetylserine modification is found at serine 2. Substrate is bound by residues 10-17 (RHGEGQWN), 23-24 (CS), arginine 62, 89-92 (ERHY), arginine 100, and 116-117 (RR). Histidine 11 functions as the Tele-phosphohistidine intermediate in the catalytic mechanism. Catalysis depends on glutamate 89, which acts as the Proton donor/acceptor. Position 122 is a phosphothreonine (threonine 122). Substrate is bound at residue 189–190 (GN).

The protein belongs to the phosphoglycerate mutase family. BPG-dependent PGAM subfamily. As to quaternary structure, homodimer. As to expression, expressed in red blood cells. Expressed in placenta (labyrinthine trophoblasts).

It catalyses the reaction (2R)-3-phospho-glyceroyl phosphate = (2R)-2,3-bisphosphoglycerate + H(+). The enzyme catalyses (2R)-2-phosphoglycerate = (2R)-3-phosphoglycerate. At alkaline pH BPGM favors the synthase reaction; however, at lower pH the phosphatase reaction is dominant. Inhibited by citrate. Functionally, plays a major role in regulating hemoglobin oxygen affinity by controlling the levels of its allosteric effector 2,3-bisphosphoglycerate (2,3-BPG). Also exhibits mutase (EC 5.4.2.11) activity. The protein is Bisphosphoglycerate mutase (Bpgm) of Mus musculus (Mouse).